The following is a 168-amino-acid chain: Disulfide bond formation protein B 2 (168 aa).

At 1–14 (MSAPIGATRAERWT) the chain is on the cytoplasmic side. Residues 15–31 (LLAIGVASFELVAGALW) form a helical membrane-spanning segment. Topologically, residues 32 to 49 (IQLAWQEDPCPLCIIQRY) are periplasmic. Residues Cys41 and Cys44 are joined by a disulfide bond. A helical membrane pass occupies residues 50 to 64 (LFLLIALFTFVAAAG). At 65-69 (GRRVA) the chain is on the cytoplasmic side. The helical transmembrane segment at 70–87 (LLRVLSLTTALAGAAVAV) threads the bilayer. Residues 88 to 142 (RHIYVQAHPGFSCGFDALQPVIDSLPPAHWLPPVFKVGGLCETLYPPILGLSLPM) lie on the Periplasmic side of the membrane. Cys100 and Cys128 form a disulfide bridge. Residues 143–161 (WALVGFSAIAVALGWRIRA) traverse the membrane as a helical segment. The Cytoplasmic segment spans residues 162–168 (QAVIRTA).

This sequence belongs to the DsbB family.

The protein localises to the cell inner membrane. Required for disulfide bond formation in some periplasmic proteins. Acts by oxidizing the DsbA protein. The sequence is that of Disulfide bond formation protein B 2 from Burkholderia lata (strain ATCC 17760 / DSM 23089 / LMG 22485 / NCIMB 9086 / R18194 / 383).